Reading from the N-terminus, the 734-residue chain is Transcription factor EMB1444 (734 aa).

Residues Gln537–Gln566 are disordered. A Nuclear localization signal motif is present at residues Asn548 to Gly555. In terms of domain architecture, bHLH spans Ala552 to Leu601. Over residues Lys553–Gln566 the composition is skewed to basic and acidic residues.

Belongs to the bHLH protein family. LHW subfamily. In terms of assembly, homodimer.

The protein localises to the nucleus. Transcription factor that may regulate root development. The sequence is that of Transcription factor EMB1444 from Arabidopsis thaliana (Mouse-ear cress).